We begin with the raw amino-acid sequence, 315 residues long: Transmembrane protein 231 (315 aa).

Residues 23–43 (AALFLLLTTALTYIPPLLVAF) form a helical membrane-spanning segment. 3 N-linked (GlcNAc...) asparagine glycosylation sites follow: asparagine 194, asparagine 199, and asparagine 221. Residues 262-282 (FWEMIKFAWIQYVSILLIFLW) form a helical membrane-spanning segment.

The protein belongs to the TMEM231 family. As to quaternary structure, part of the tectonic-like complex (also named B9 complex). Interacts with TMEM107.

The protein localises to the cell projection. It localises to the cilium membrane. Its function is as follows. Transmembrane component of the tectonic-like complex, a complex localized at the transition zone of primary cilia and acting as a barrier that prevents diffusion of transmembrane proteins between the cilia and plasma membranes. Required for ciliogenesis and sonic hedgehog/SHH signaling. The protein is Transmembrane protein 231 (Tmem231) of Mus musculus (Mouse).